A 316-amino-acid polypeptide reads, in one-letter code: Pantothenate kinase (316 aa).

95-102 (GSVAVGKS) contacts ATP.

Belongs to the prokaryotic pantothenate kinase family.

The protein resides in the cytoplasm. It carries out the reaction (R)-pantothenate + ATP = (R)-4'-phosphopantothenate + ADP + H(+). Its pathway is cofactor biosynthesis; coenzyme A biosynthesis; CoA from (R)-pantothenate: step 1/5. In Shigella boydii serotype 18 (strain CDC 3083-94 / BS512), this protein is Pantothenate kinase.